Reading from the N-terminus, the 294-residue chain is tRNA-cytidine(32) 2-sulfurtransferase (294 aa).

The PP-loop motif signature appears at Ser-58–Ser-63. Positions 133, 136, and 224 each coordinate [4Fe-4S] cluster.

This sequence belongs to the TtcA family. In terms of assembly, homodimer. Requires Mg(2+) as cofactor. [4Fe-4S] cluster is required as a cofactor.

It is found in the cytoplasm. It catalyses the reaction cytidine(32) in tRNA + S-sulfanyl-L-cysteinyl-[cysteine desulfurase] + AH2 + ATP = 2-thiocytidine(32) in tRNA + L-cysteinyl-[cysteine desulfurase] + A + AMP + diphosphate + H(+). Its pathway is tRNA modification. Catalyzes the ATP-dependent 2-thiolation of cytidine in position 32 of tRNA, to form 2-thiocytidine (s(2)C32). The sulfur atoms are provided by the cysteine/cysteine desulfurase (IscS) system. This is tRNA-cytidine(32) 2-sulfurtransferase from Ruegeria pomeroyi (strain ATCC 700808 / DSM 15171 / DSS-3) (Silicibacter pomeroyi).